The primary structure comprises 202 residues: MTELRIYATRGAGVEADRDSAVAAAPEALLSTSNAEQISAQLKTRGIKFQRWPSKPKLEQGAMQEQILEAYASLIASVQKNEGYQTVDVMRVERDQISGSTLRQTFRQEHQHAEDEVRFFVEGCGLFALHIKDEVLQVICEANDWIAIPAGTRHWFDMGVDPNYCVIRFFKNSGGWAASFTHDPIADHYPGLDQARKQTTQG.

Residues histidine 110, histidine 112, glutamate 116, and histidine 154 each contribute to the Fe(2+) site. Ni(2+) is bound by residues histidine 110, histidine 112, glutamate 116, and histidine 154.

It belongs to the acireductone dioxygenase (ARD) family. Monomer. The cofactor is Fe(2+). Ni(2+) serves as cofactor.

It catalyses the reaction 1,2-dihydroxy-5-(methylsulfanyl)pent-1-en-3-one + O2 = 3-(methylsulfanyl)propanoate + CO + formate + 2 H(+). The enzyme catalyses 1,2-dihydroxy-5-(methylsulfanyl)pent-1-en-3-one + O2 = 4-methylsulfanyl-2-oxobutanoate + formate + 2 H(+). It functions in the pathway amino-acid biosynthesis; L-methionine biosynthesis via salvage pathway; L-methionine from S-methyl-5-thio-alpha-D-ribose 1-phosphate: step 5/6. In terms of biological role, catalyzes 2 different reactions between oxygen and the acireductone 1,2-dihydroxy-3-keto-5-methylthiopentene (DHK-MTPene) depending upon the metal bound in the active site. Fe-containing acireductone dioxygenase (Fe-ARD) produces formate and 2-keto-4-methylthiobutyrate (KMTB), the alpha-ketoacid precursor of methionine in the methionine recycle pathway. Ni-containing acireductone dioxygenase (Ni-ARD) produces methylthiopropionate, carbon monoxide and formate, and does not lie on the methionine recycle pathway. In Synechococcus sp. (strain CC9311), this protein is Acireductone dioxygenase.